Consider the following 641-residue polypeptide: SUMO-activating enzyme subunit 2-B (641 aa).

ATP-binding positions include 24-29, aspartate 48, 56-59, lysine 72, 95-96, and 117-122; these read GAGGIG, NLNR, SI, and DNNAAR. Zn(2+) contacts are provided by cysteine 158 and cysteine 161. The active-site Glycyl thioester intermediate is the cysteine 173. Zn(2+) contacts are provided by cysteine 439 and cysteine 442. A disordered region spans residues 546–641; that stretch reads GDVPEKGPQK…EEDDDIIALD (96 aa). The span at 548–561 shows a compositional bias: basic and acidic residues; it reads VPEKGPQKPPEESV. Over residues 562–579 the composition is skewed to polar residues; that stretch reads KNITNGSDDGAQPSTSKA. Acidic residues-rich tracts occupy residues 582 to 594 and 630 to 641; these read QDDVLIVDSDEES and PVEEDDDIIALD.

This sequence belongs to the ubiquitin-activating E1 family. As to quaternary structure, heterodimer of sae1 and uba2/sae2. The heterodimer corresponds to the two domains that are encoded on a single polypeptide chain in ubiquitin-activating enzyme E1. Interacts with ube2i.

The protein localises to the nucleus. It functions in the pathway protein modification; protein sumoylation. Functionally, the heterodimer acts as an E1 ligase for sumo1, sumo2, and sumo3. It mediates ATP-dependent activation of sumo proteins followed by formation of a thioester bond between a sumo protein and a conserved active site cysteine residue on uba2/sae2. The chain is SUMO-activating enzyme subunit 2-B (uba2-b) from Xenopus laevis (African clawed frog).